Here is a 139-residue protein sequence, read N- to C-terminus: ATP synthase epsilon chain (139 aa).

It belongs to the ATPase epsilon chain family. As to quaternary structure, F-type ATPases have 2 components, CF(1) - the catalytic core - and CF(0) - the membrane proton channel. CF(1) has five subunits: alpha(3), beta(3), gamma(1), delta(1), epsilon(1). CF(0) has three main subunits: a, b and c.

Its subcellular location is the cell inner membrane. Functionally, produces ATP from ADP in the presence of a proton gradient across the membrane. This is ATP synthase epsilon chain from Nitrosospira multiformis (strain ATCC 25196 / NCIMB 11849 / C 71).